A 393-amino-acid chain; its full sequence is Probable acetyl-CoA acetyltransferase (393 aa).

Position 2 (Thr2) is a propeptide, removed; alternate. Cys88 acts as the Acyl-thioester intermediate in catalysis. Residues His349 and Cys379 each act as proton acceptor in the active site.

This sequence belongs to the thiolase-like superfamily. Thiolase family.

The catalysed reaction is 2 acetyl-CoA = acetoacetyl-CoA + CoA. The sequence is that of Probable acetyl-CoA acetyltransferase (fadA4) from Mycobacterium tuberculosis (strain ATCC 25618 / H37Rv).